The chain runs to 246 residues: 3-deoxy-manno-octulosonate cytidylyltransferase (246 aa).

It belongs to the KdsB family.

The protein localises to the cytoplasm. It catalyses the reaction 3-deoxy-alpha-D-manno-oct-2-ulosonate + CTP = CMP-3-deoxy-beta-D-manno-octulosonate + diphosphate. Its pathway is nucleotide-sugar biosynthesis; CMP-3-deoxy-D-manno-octulosonate biosynthesis; CMP-3-deoxy-D-manno-octulosonate from 3-deoxy-D-manno-octulosonate and CTP: step 1/1. It participates in bacterial outer membrane biogenesis; lipopolysaccharide biosynthesis. Functionally, activates KDO (a required 8-carbon sugar) for incorporation into bacterial lipopolysaccharide in Gram-negative bacteria. The protein is 3-deoxy-manno-octulosonate cytidylyltransferase of Leptospira biflexa serovar Patoc (strain Patoc 1 / Ames).